The following is a 224-amino-acid chain: Glutathione S-transferase U8 (224 aa).

The GST N-terminal domain occupies 5 to 85; that stretch reads EHVKLLGLWG…YIEDTWKTTH (81 aa). Glutathione contacts are provided by residues 15-16, 42-43, 56-57, and 69-70; these read SP, NR, KV, and ES. The region spanning 91–213 is the GST C-terminal domain; sequence DPYERAMARF…LPPKEKLVAV (123 aa). Phosphothreonine is present on threonine 152.

It belongs to the GST superfamily. Tau family.

The protein resides in the cytoplasm. Its subcellular location is the cytosol. It catalyses the reaction RX + glutathione = an S-substituted glutathione + a halide anion + H(+). In terms of biological role, may be involved in the conjugation of reduced glutathione to a wide number of exogenous and endogenous hydrophobic electrophiles and have a detoxification role against certain herbicides. This Arabidopsis thaliana (Mouse-ear cress) protein is Glutathione S-transferase U8 (GSTU8).